Reading from the N-terminus, the 254-residue chain is Large ribosomal subunit protein uL15m (254 aa).

The N-terminal 78 residues, 1-78 (MFNILSRVCR…GSGQRRGRRI (78 aa)), are a transit peptide targeting the mitochondrion. The tract at residues 44-104 (NYQSKKRVGR…KVGHSTGHLK (61 aa)) is disordered. The segment covering 64–79 (GRGHKGSGQRRGRRIK) has biased composition (basic residues).

The protein belongs to the universal ribosomal protein uL15 family. As to quaternary structure, component of the mitochondrial large ribosomal subunit (mt-LSU). Mature yeast 74S mitochondrial ribosomes consist of a small (37S) and a large (54S) subunit. The 37S small subunit contains a 15S ribosomal RNA (15S mt-rRNA) and at least 32 different proteins. The 54S large subunit contains a 21S rRNA (21S mt-rRNA) and at least 45 different proteins.

The protein resides in the mitochondrion. Functionally, component of the mitochondrial ribosome (mitoribosome), a dedicated translation machinery responsible for the synthesis of mitochondrial genome-encoded proteins, including at least some of the essential transmembrane subunits of the mitochondrial respiratory chain. The mitoribosomes are attached to the mitochondrial inner membrane and translation products are cotranslationally integrated into the membrane. In Schizosaccharomyces pombe (strain 972 / ATCC 24843) (Fission yeast), this protein is Large ribosomal subunit protein uL15m (mrpl10).